The following is a 423-amino-acid chain: Protein SOSEKI 5 (423 aa).

The interval 1-33 is disordered; that stretch reads MSSRVFRATPDNNYLVPRRSKDQQDTSPDRNRI. Positions 19–33 are enriched in basic and acidic residues; sequence RSKDQQDTSPDRNRI. Residues 45–136 form a DIX-like oligomerization domain region; that stretch reads RKVPVVYYLC…YVLKGSEVLD (92 aa). Disordered regions lie at residues 150–172 and 196–258; these read SSFRDPRSLNPDKNSGDDIPAVI and SSAE…SPET. The span at 196 to 211 shows a compositional bias: polar residues; that stretch reads SSAESTQRLAADASTQ. 2 short sequence motifs (association to cell membranes) span residues 233–234 and 303–304; these read AS and CG. The segment at 379 to 423 is disordered; the sequence is SSSYNADRCSRMGPTTEKDEEEAVRAKCIPRKPKPVAKRNNGGQQ. Residues 406–415 are compositionally biased toward basic residues; it reads CIPRKPKPVA.

It belongs to the SOSEKI family. In terms of assembly, homodimer. Forms long polymer filaments with other SOKs proteins polymers (e.g. SOK1, SOK2, SOK3 and SOK4) crucial for polar localization and biological activity. Binds to ANGUSTIFOLIA (AN). Expressed during embryogenesis and in roots.

Its subcellular location is the cell membrane. Functionally, SOSEKI proteins (SOK1-5) locally interpret global polarity cues and can influence cell division orientation to coordinate cell polarization relative to body axes. This chain is Protein SOSEKI 5, found in Arabidopsis thaliana (Mouse-ear cress).